A 234-amino-acid chain; its full sequence is Protein XNDC1N (234 aa).

The sequence is that of Protein XNDC1N from Homo sapiens (Human).